The primary structure comprises 167 residues: Peptide deformylase (167 aa).

Fe cation-binding residues include C90 and H132. E133 is a catalytic residue. Position 136 (H136) interacts with Fe cation.

It belongs to the polypeptide deformylase family. It depends on Fe(2+) as a cofactor.

The enzyme catalyses N-terminal N-formyl-L-methionyl-[peptide] + H2O = N-terminal L-methionyl-[peptide] + formate. Functionally, removes the formyl group from the N-terminal Met of newly synthesized proteins. Requires at least a dipeptide for an efficient rate of reaction. N-terminal L-methionine is a prerequisite for activity but the enzyme has broad specificity at other positions. This chain is Peptide deformylase, found in Dehalococcoides mccartyi (strain CBDB1).